Consider the following 204-residue polypeptide: MELSIVTPQGAKGTVAVSEVAFGKEFNQDLVHQAVVAYMAGSRQGTKAQKNRAAVSGGGKKPWRQKGTGRARAGTIRSPIWRSGGVTFAAQPRDFEQKLNKKMYRAALRCILSELARQERLVVVEEFDLDAPKTKILVQKLAEYDLTDALIVSEQVSENLYLAARNLHKVDVRDVQAIDPVSLIRFEKVVMTVSAVKKLEEVLA.

Residues 47 to 69 (KAQKNRAAVSGGGKKPWRQKGTG) form a disordered region.

This sequence belongs to the universal ribosomal protein uL4 family. Part of the 50S ribosomal subunit.

Functionally, one of the primary rRNA binding proteins, this protein initially binds near the 5'-end of the 23S rRNA. It is important during the early stages of 50S assembly. It makes multiple contacts with different domains of the 23S rRNA in the assembled 50S subunit and ribosome. In terms of biological role, forms part of the polypeptide exit tunnel. This is Large ribosomal subunit protein uL4 from Teredinibacter turnerae (strain ATCC 39867 / T7901).